Consider the following 232-residue polypeptide: MKKNLQIAIDGPAGAGKSTIAKAIARQLGFFYVDTGAMYRAIAYKALRLNIALTQEEEIAGMARQTEITLEHSAARRVFCDGLDVTEAIRSPEVSRSVSIIAAYPEVRERLVELQRQEAGQGGVVMDGRDIGTYVLPDADLKIFLTASSEERARRRWLELQRAGKELSLAEVQRDMDARDHYDQQRAVSPLIPAADAILLDTTGLQIEEIVDRILSLFNDKVETGYVRSQNQ.

11–19 (GPAGAGKST) lines the ATP pocket.

Belongs to the cytidylate kinase family. Type 1 subfamily.

Its subcellular location is the cytoplasm. The catalysed reaction is CMP + ATP = CDP + ADP. The enzyme catalyses dCMP + ATP = dCDP + ADP. This Desulfitobacterium hafniense (strain Y51) protein is Cytidylate kinase.